Here is a 221-residue protein sequence, read N- to C-terminus: MNEEKAVVVFSGGQDSTTCLFWAKKQFGEVEAVTFDYGQRHRREIDVAQAIADELGVRHTVLDLSLLGQLAPNALTRRDIAIEQKKGELPTTFVDGRNLLFLSFAAVFAKQRGARHIVTGVCETDFSGYPDCRDVFIKSLNVTLNLAMDYEFVIHTPLMWLTKAETWKLADELGALEFIRTKTLTCYNGIIADGCGECPACALRKRGLDEYLREKAEVESR.

An ATP-binding site is contributed by 10 to 20; that stretch reads FSGGQDSTTCL. 4 residues coordinate Zn(2+): Cys-186, Cys-195, Cys-198, and Cys-201.

This sequence belongs to the QueC family. As to quaternary structure, homodimer. Zn(2+) serves as cofactor.

The catalysed reaction is 7-carboxy-7-deazaguanine + NH4(+) + ATP = 7-cyano-7-deazaguanine + ADP + phosphate + H2O + H(+). It participates in purine metabolism; 7-cyano-7-deazaguanine biosynthesis. Catalyzes the ATP-dependent conversion of 7-carboxy-7-deazaguanine (CDG) to 7-cyano-7-deazaguanine (preQ(0)). The protein is 7-cyano-7-deazaguanine synthase of Geobacillus kaustophilus (strain HTA426).